Consider the following 62-residue polypeptide: Large ribosomal subunit protein uL30 (62 aa).

Belongs to the universal ribosomal protein uL30 family. In terms of assembly, part of the 50S ribosomal subunit.

This is Large ribosomal subunit protein uL30 from Gluconobacter oxydans (strain 621H) (Gluconobacter suboxydans).